We begin with the raw amino-acid sequence, 283 residues long: MGIRSYQAYPPGTRDGSIVNSKEMVNSKEMIESEPQKVLVRGRHIARGRNHRGIITSRHRGGGHRRLYRMIDFRRDKRDVSGEIKTIEYDPNRNTCICLTNYGDGKKRYILYPHGIEIGNKIISGIEAPISIGNTSPLSTNMPLGASVHNIETRPGRGGQLVRAAGTTAKILAKEGQLVTLKLPSGEIRSLPQKCFATIGQIGNIDANNLKLGKAGSRRWLGKRPSVRGVVMNPIDHPHGGGEGKVPIGRKKPLTPWGHPALGRKSRKRRKYSDTLILRRRMA.

Residues 229–274 form a disordered region; it reads GVVMNPIDHPHGGGEGKVPIGRKKPLTPWGHPALGRKSRKRRKYSD. Basic residues predominate over residues 262-271; sequence LGRKSRKRRK.

This sequence belongs to the universal ribosomal protein uL2 family. Part of the 50S ribosomal subunit.

The protein resides in the plastid. The sequence is that of Large ribosomal subunit protein uL2c (rpl2) from Aneura mirabilis (Parasitic liverwort).